The primary structure comprises 469 residues: Protein YfjI (469 aa).

In Escherichia coli (strain K12), this protein is Protein YfjI (yfjI).